The sequence spans 1454 residues: Probable cleavage and polyadenylation specificity factor subunit 1 (1454 aa).

Residues lysine 736–proline 765 are disordered.

The protein belongs to the CPSF1 family. In terms of assembly, CPSF is a heterotetramer composed of four distinct subunits 160 (cpsf-1), 100 (cpsf-2), 70 (cpsf-3), and 30 kDa (cpsf-4).

It localises to the nucleus. In terms of biological role, CPSF plays a key role in pre-mRNA 3'-end formation, recognizing the AAUAAA signal sequence and interacting with poly(A)polymerase and other factors to bring about cleavage and poly(A) addition. This subunit is involved in the RNA recognition step of the polyadenylation reaction. The chain is Probable cleavage and polyadenylation specificity factor subunit 1 (cpsf-1) from Caenorhabditis elegans.